Consider the following 391-residue polypeptide: 1-deoxy-D-xylulose 5-phosphate reductoisomerase (391 aa).

T17, G18, S19, I20, N47, and N130 together coordinate NADPH. A 1-deoxy-D-xylulose 5-phosphate-binding site is contributed by K131. Residue E132 coordinates NADPH. D156 is a Mn(2+) binding site. Residues S157, E158, S182, and H205 each coordinate 1-deoxy-D-xylulose 5-phosphate. E158 contacts Mn(2+). Residue G211 coordinates NADPH. S218, N223, K224, and E227 together coordinate 1-deoxy-D-xylulose 5-phosphate. E227 contributes to the Mn(2+) binding site.

This sequence belongs to the DXR family. Requires Mg(2+) as cofactor. The cofactor is Mn(2+).

The enzyme catalyses 2-C-methyl-D-erythritol 4-phosphate + NADP(+) = 1-deoxy-D-xylulose 5-phosphate + NADPH + H(+). Its pathway is isoprenoid biosynthesis; isopentenyl diphosphate biosynthesis via DXP pathway; isopentenyl diphosphate from 1-deoxy-D-xylulose 5-phosphate: step 1/6. Its function is as follows. Catalyzes the NADPH-dependent rearrangement and reduction of 1-deoxy-D-xylulose-5-phosphate (DXP) to 2-C-methyl-D-erythritol 4-phosphate (MEP). The polypeptide is 1-deoxy-D-xylulose 5-phosphate reductoisomerase (Rhizobium meliloti (strain 1021) (Ensifer meliloti)).